A 963-amino-acid chain; its full sequence is Protocadherin alpha-C1 (963 aa).

The N-terminal stretch at 1–18 (MVGCGVAVLCLWVSCGAA) is a signal peptide. 5 Cadherin domains span residues 19–124 (AGQL…SPLF), 125–233 (PAGD…APVF), 234–340 (ERSV…APEL), 349–445 (VPED…TPNF), and 446–555 (PQPQ…YPVI). The Extracellular segment spans residues 19-683 (AGQLEYSVPE…GGQLSAQNLY (665 aa)). Asn38 is a glycosylation site (N-linked (GlcNAc...) asparagine). N-linked (GlcNAc...) asparagine glycosylation is found at Asn248 and Asn274. An N-linked (GlcNAc...) asparagine glycan is attached at Asn562. The Cadherin 6 domain maps to 570–667 (VPRSARTGHL…NSVPQLLPDF (98 aa)). The chain crosses the membrane as a helical span at residues 684 to 704 (LVIALACISFLFLGCLLFFVC). Topologically, residues 705–963 (TKLHQSPGCC…GNSTTDNSDQ (259 aa)) are cytoplasmic. PXXP repeat units lie at residues 812-815 (PRQP), 845-848 (PGGP), 886-889 (PGNP), and 904-907 (PGSP). Positions 812–907 (PRQPNPDWRY…PDKFIIPGSP (96 aa)) are 4 X 4 AA repeats of P-X-X-P. Residues 844 to 963 (GPGGPDQQWP…GNSTTDNSDQ (120 aa)) form a disordered region. A compositionally biased stretch (basic and acidic residues) spans 922–936 (DKSDFITFGKKEETK).

It localises to the cell membrane. In terms of biological role, potential calcium-dependent cell-adhesion protein. May be involved in the establishment and maintenance of specific neuronal connections in the brain. In Homo sapiens (Human), this protein is Protocadherin alpha-C1 (PCDHAC1).